A 493-amino-acid polypeptide reads, in one-letter code: UDP-N-acetylmuramoyl-L-alanyl-D-glutamate--2,6-diaminopimelate ligase (493 aa).

Residue S31 coordinates UDP-N-acetyl-alpha-D-muramoyl-L-alanyl-D-glutamate. 111 to 117 (GTNGKTT) contacts ATP. UDP-N-acetyl-alpha-D-muramoyl-L-alanyl-D-glutamate contacts are provided by residues N152, 153-154 (TT), S180, and R188. K220 bears the N6-carboxylysine mark. Meso-2,6-diaminopimelate contacts are provided by residues R386, 410–413 (DNPR), G462, and E466. Residues 410–413 (DNPR) carry the Meso-diaminopimelate recognition motif motif.

Belongs to the MurCDEF family. MurE subfamily. Requires Mg(2+) as cofactor. Carboxylation is probably crucial for Mg(2+) binding and, consequently, for the gamma-phosphate positioning of ATP.

The protein localises to the cytoplasm. The catalysed reaction is UDP-N-acetyl-alpha-D-muramoyl-L-alanyl-D-glutamate + meso-2,6-diaminopimelate + ATP = UDP-N-acetyl-alpha-D-muramoyl-L-alanyl-gamma-D-glutamyl-meso-2,6-diaminopimelate + ADP + phosphate + H(+). Its pathway is cell wall biogenesis; peptidoglycan biosynthesis. Its function is as follows. Catalyzes the addition of meso-diaminopimelic acid to the nucleotide precursor UDP-N-acetylmuramoyl-L-alanyl-D-glutamate (UMAG) in the biosynthesis of bacterial cell-wall peptidoglycan. In Oceanobacillus iheyensis (strain DSM 14371 / CIP 107618 / JCM 11309 / KCTC 3954 / HTE831), this protein is UDP-N-acetylmuramoyl-L-alanyl-D-glutamate--2,6-diaminopimelate ligase (murE1).